The chain runs to 116 residues: C-C motif chemokine 6 (116 aa).

The first 21 residues, 1–21, serve as a signal peptide directing secretion; sequence MRNSKTAISFFILVAVLGSQA. Cystine bridges form between Cys50–Cys73, Cys51–Cys89, and Cys60–Cys100.

The protein belongs to the intercrine beta (chemokine CC) family. Post-translationally, the N-terminal is proteolytically cleaved by proteases associated with inflammatory responses. The processed forms CL6(22-95) and CCL6(23-95) show increase in CCR1-mediated signaling and chemotaxis assays in vitro. In terms of tissue distribution, expressed in myelopoietic bone marrow cultures stimulated by GM-CSF.

It is found in the secreted. In terms of biological role, chemotactic factor that attracts mostly macrophage, but it can also attract B cells, CD4(+) lymphocytes and eosinophils. The chain is C-C motif chemokine 6 (Ccl6) from Mus musculus (Mouse).